We begin with the raw amino-acid sequence, 308 residues long: 4-diphosphocytidyl-2-C-methyl-D-erythritol kinase (308 aa).

Residue Lys-24 is part of the active site. An ATP-binding site is contributed by 118 to 128 (PVGAGMAGGSA). Asp-160 is a catalytic residue.

The protein belongs to the GHMP kinase family. IspE subfamily.

The enzyme catalyses 4-CDP-2-C-methyl-D-erythritol + ATP = 4-CDP-2-C-methyl-D-erythritol 2-phosphate + ADP + H(+). It functions in the pathway isoprenoid biosynthesis; isopentenyl diphosphate biosynthesis via DXP pathway; isopentenyl diphosphate from 1-deoxy-D-xylulose 5-phosphate: step 3/6. Functionally, catalyzes the phosphorylation of the position 2 hydroxy group of 4-diphosphocytidyl-2C-methyl-D-erythritol. This Bifidobacterium adolescentis (strain ATCC 15703 / DSM 20083 / NCTC 11814 / E194a) protein is 4-diphosphocytidyl-2-C-methyl-D-erythritol kinase.